We begin with the raw amino-acid sequence, 140 residues long: Zinc finger SWIM domain-containing protein 7 (140 aa).

The segment at 76–114 adopts an SWIM-type zinc-finger fold; sequence YTCFTSCHYCPCPAFSFTVLRRNESLMCKHLLAVILSQA.

It belongs to the SWS1 family.

Its subcellular location is the nucleus. In terms of biological role, involved in early stages of the homologous recombination repair (HRR) pathway of double-stranded DNA breaks arising during DNA replication or induced by DNA-damaging agents. The chain is Zinc finger SWIM domain-containing protein 7 (zswim7) from Danio rerio (Zebrafish).